Here is a 380-residue protein sequence, read N- to C-terminus: PqqA peptide cyclase (380 aa).

A Radical SAM core domain is found at 12 to 228 (FGIPLAVLLE…EEARERLKGR (217 aa)). [4Fe-4S] cluster is bound by residues Cys26, Cys30, and Cys33.

The protein belongs to the radical SAM superfamily. PqqE family. As to quaternary structure, interacts with PqqD. The interaction is necessary for activity of PqqE. The cofactor is [4Fe-4S] cluster.

The enzyme catalyses [PQQ precursor protein] + S-adenosyl-L-methionine = E-Y cross-linked-[PQQ precursor protein] + 5'-deoxyadenosine + L-methionine + H(+). Its pathway is cofactor biosynthesis; pyrroloquinoline quinone biosynthesis. In terms of biological role, catalyzes the cross-linking of a glutamate residue and a tyrosine residue in the PqqA protein as part of the biosynthesis of pyrroloquinoline quinone (PQQ). The polypeptide is PqqA peptide cyclase (Bradyrhizobium diazoefficiens (strain JCM 10833 / BCRC 13528 / IAM 13628 / NBRC 14792 / USDA 110)).